We begin with the raw amino-acid sequence, 529 residues long: Meiosis 1 arrest protein (529 aa).

2 disordered regions span residues 180-201 and 504-529; these read KGIQERSDSPSPTEEPSNDESS and AASKASSAAFLPSDSEEGEEERPSHT. Residues 188-200 show a composition bias toward polar residues; it reads SPSPTEEPSNDES. At Ser-516 the chain carries Phosphoserine.

Expressed in germ cells of the testis. Expressed from spermatogonia to spermatids. Expressed at very low levels in lung, stomach, thymus. Not detected in Sertoli cells.

The protein resides in the cytoplasm. Functionally, required for meiosis I progression during spermatogenesis. The polypeptide is Meiosis 1 arrest protein (M1ap) (Mus musculus (Mouse)).